A 389-amino-acid polypeptide reads, in one-letter code: Indole-3-acetate monooxygenase (389 aa).

The protein belongs to the HpaH/HsaA monooxygenase family.

It carries out the reaction (indol-3-yl)acetate + NADH + O2 + H(+) = 2-hydroxy-(1H-indol-3-yl)acetate + NAD(+) + H2O. The enzyme catalyses indole + NADH + O2 + H(+) = indoxyl + NAD(+) + H2O. Involved in the degradation of the plant hormone indole-3-acetic acid (IAA). Catalyzes the first step of the pathway, the conversion of IAA to 2-hydroxy-IAA (2-OH-IAA). Can also convert indole to indoxyl, which spontaneously dimerizes in the presence of oxygen to form the blue pigment indigo. This chain is Indole-3-acetate monooxygenase, found in Acinetobacter baumannii (strain ATCC 19606 / DSM 30007 / JCM 6841 / CCUG 19606 / CIP 70.34 / NBRC 109757 / NCIMB 12457 / NCTC 12156 / 81).